Reading from the N-terminus, the 275-residue chain is Orotidine 5'-phosphate decarboxylase (275 aa).

Lys95 acts as the Proton donor in catalysis.

The protein belongs to the OMP decarboxylase family. Type 2 subfamily.

It carries out the reaction orotidine 5'-phosphate + H(+) = UMP + CO2. The protein operates within pyrimidine metabolism; UMP biosynthesis via de novo pathway; UMP from orotate: step 2/2. The protein is Orotidine 5'-phosphate decarboxylase of Delftia acidovorans (strain DSM 14801 / SPH-1).